The primary structure comprises 260 residues: Phosphate import ATP-binding protein PstB (260 aa).

An ABC transporter domain is found at 14 to 255; it reads VQVKNLAFYY…PRNKQTEDYI (242 aa). 46 to 53 contributes to the ATP binding site; the sequence is GPSGCGKS.

It belongs to the ABC transporter superfamily. Phosphate importer (TC 3.A.1.7) family. In terms of assembly, the complex is composed of two ATP-binding proteins (PstB), two transmembrane proteins (PstC and PstA) and a solute-binding protein (PstS).

The protein localises to the cell inner membrane. The catalysed reaction is phosphate(out) + ATP + H2O = ADP + 2 phosphate(in) + H(+). In terms of biological role, part of the ABC transporter complex PstSACB involved in phosphate import. Responsible for energy coupling to the transport system. The sequence is that of Phosphate import ATP-binding protein PstB from Syntrophotalea carbinolica (strain DSM 2380 / NBRC 103641 / GraBd1) (Pelobacter carbinolicus).